A 123-amino-acid polypeptide reads, in one-letter code: Ribosome-binding factor A (123 aa).

The protein belongs to the RbfA family. In terms of assembly, monomer. Binds 30S ribosomal subunits, but not 50S ribosomal subunits or 70S ribosomes.

The protein localises to the cytoplasm. One of several proteins that assist in the late maturation steps of the functional core of the 30S ribosomal subunit. Associates with free 30S ribosomal subunits (but not with 30S subunits that are part of 70S ribosomes or polysomes). Required for efficient processing of 16S rRNA. May interact with the 5'-terminal helix region of 16S rRNA. This Variovorax paradoxus (strain S110) protein is Ribosome-binding factor A.